The following is a 474-amino-acid chain: L-arabinose isomerase (474 aa).

Mn(2+) is bound by residues Glu306, Glu331, His348, and His447.

This sequence belongs to the arabinose isomerase family. Mn(2+) is required as a cofactor.

The catalysed reaction is beta-L-arabinopyranose = L-ribulose. It participates in carbohydrate degradation; L-arabinose degradation via L-ribulose; D-xylulose 5-phosphate from L-arabinose (bacterial route): step 1/3. Functionally, catalyzes the conversion of L-arabinose to L-ribulose. The protein is L-arabinose isomerase of Lactiplantibacillus plantarum (strain ATCC BAA-793 / NCIMB 8826 / WCFS1) (Lactobacillus plantarum).